The primary structure comprises 582 residues: ATP-dependent lipid A-core flippase (582 aa).

A run of 5 helical transmembrane segments spans residues 25 to 45 (WFML…QAGA), 64 to 84 (VLIV…GQFM), 142 to 162 (AIIV…FLLW), 165 to 185 (WKLT…MNIT), and 253 to 273 (VIVQ…YIHL). Residues 29–309 (VISVIGYALY…LTDVNVKVQR (281 aa)) enclose the ABC transmembrane type-1 domain. Positions 342–577 (IDFEGVSFGY…NGLYTQMYRM (236 aa)) constitute an ABC transporter domain. Residue 375–382 (GRSGAGKS) coordinates ATP.

This sequence belongs to the ABC transporter superfamily. Lipid exporter (TC 3.A.1.106) family. In terms of assembly, homodimer.

The protein resides in the cell inner membrane. The enzyme catalyses ATP + H2O + lipid A-core oligosaccharideSide 1 = ADP + phosphate + lipid A-core oligosaccharideSide 2.. Involved in lipopolysaccharide (LPS) biosynthesis. Translocates lipid A-core from the inner to the outer leaflet of the inner membrane. Transmembrane domains (TMD) form a pore in the inner membrane and the ATP-binding domain (NBD) is responsible for energy generation. The polypeptide is ATP-dependent lipid A-core flippase (Alcanivorax borkumensis (strain ATCC 700651 / DSM 11573 / NCIMB 13689 / SK2)).